The primary structure comprises 500 residues: MHIIHIASELAPLAKVGGLADVVLGLCRELSWKGHDVDIIIPKYDCMDSEQIRDLTVDYFELPSFYNGEWFFNTVWMGWVENLKVYFIEPHHPRFFFNRGCFYGCEDDLERFLYFSRTALEFLYKKSILPDIIHLHDWQTAVIAPLYKDMYQKLGYTKPKILFTIHNMEYQGKCAAHDLNYIGLDGNRYQQHSFMQDNLYPHLINLLKGGIVYSDFVTTVSPNYAKEVLTPKEGRGLEATLVEYQHKFKGILNGIDYSYWNPEIDRFLPAHYSLREMPKNKKDRNTVDKKGFIKKILREKLYLAEEHRPIIGCITRLVPQKGIDLIKHTIRHIVEKKGQFILLGSSPIPSINDEFHRLKHQYTDHPHIHLILHHSEELAHLIYAGSDMFIVPSLFEPCGLTQIIALKYGTVPIVRRTGGLADTIIDVDHTDQQPDKKNGYVFDDPDANGIDSAIDRAIHCWFEEPEKWRQLMLNGMKMDFSWNQSSDCYLKIYQAISAKN.

Position 15 (Lys15) interacts with ADP-alpha-D-glucose.

Belongs to the glycosyltransferase 1 family. Bacterial/plant glycogen synthase subfamily.

It carries out the reaction [(1-&gt;4)-alpha-D-glucosyl](n) + ADP-alpha-D-glucose = [(1-&gt;4)-alpha-D-glucosyl](n+1) + ADP + H(+). It participates in glycan biosynthesis; glycogen biosynthesis. Synthesizes alpha-1,4-glucan chains using ADP-glucose. The polypeptide is Glycogen synthase (Protochlamydia amoebophila (strain UWE25)).